The chain runs to 74 residues: Brevinin-2Ta (74 aa).

A signal peptide spans 1–22; the sequence is MFTMKKSLLLFFFLGTISLSLC. Positions 23–41 are excised as a propeptide; that stretch reads QEERNADEDDGEMTEEEKR. Cysteines 68 and 74 form a disulfide.

It belongs to the frog skin active peptide (FSAP) family. Brevinin subfamily. As to expression, expressed by the skin glands.

Its subcellular location is the secreted. Functionally, antimicrobial peptide. The polypeptide is Brevinin-2Ta (Rana temporaria (European common frog)).